We begin with the raw amino-acid sequence, 215 residues long: Probable GTP-binding protein EngB (215 aa).

The region spanning 30–204 is the EngB-type G domain; it reads EGLEVAFAGR…QMVLAQWLGL (175 aa). GTP is bound by residues 38–45, 64–68, 82–85, 149–152, and 182–185; these read GRSNAGKS, GRTQL, DLPG, TKAD, and LFSA. Residues Ser45 and Thr66 each contribute to the Mg(2+) site.

This sequence belongs to the TRAFAC class TrmE-Era-EngA-EngB-Septin-like GTPase superfamily. EngB GTPase family. Mg(2+) serves as cofactor.

Functionally, necessary for normal cell division and for the maintenance of normal septation. This Pseudomonas aeruginosa (strain ATCC 15692 / DSM 22644 / CIP 104116 / JCM 14847 / LMG 12228 / 1C / PRS 101 / PAO1) protein is Probable GTP-binding protein EngB.